The primary structure comprises 604 residues: uncharacterized protein (604 aa).

Residues 239 to 259 (ELNSPQELNDPQELNNSQDLN) are disordered.

This is an uncharacterized protein from Escherichia coli (strain K12).